The chain runs to 836 residues: TATA box-binding protein-associated factor RNA polymerase I subunit C (836 aa).

Disordered regions lie at residues 662-683 (GDLS…QQDE) and 703-836 (HRGE…RMGF). Positions 738 to 754 (DASSAPRSQDLSTSEAR) are enriched in polar residues. Residues 780-796 (RQTLRDHTDKLPLKRDT) show a composition bias toward basic and acidic residues. T802 is subject to Phosphothreonine. Positions 803-828 (PPSQASSLQTMSFRQQTPVHSGSQPP) are enriched in polar residues.

As to quaternary structure, component of the transcription factor SL1/TIF-IB complex, composed of TBP and at least TAF1A, TAF1B, TAF1C and TAF1D. In the complex interacts directly with TBP, TAF1A and TAF1B. Interaction of the SL1/TIF-IB subunits with TBP excludes interaction of TBP with the transcription factor IID (TFIID) subunits. Interacts with MYC and RRN3. Interacts with p53/TP53; the interaction prevents the association of SL1/TIF-IB with UBTF and represses RNA polymerase I transcription. Part of Pol I pre-initiation complex (PIC), in which Pol I core assembles with RRN3 and promoter-bound UTBF and SL1/TIF-IB complex.

It is found in the nucleus. It localises to the nucleolus. Functionally, component of the transcription factor SL1/TIF-IB complex, which is involved in the assembly of the PIC (pre-initiation complex) during RNA polymerase I-dependent transcription. The rate of PIC formation probably is primarily dependent on the rate of association of SL1/TIF-IB with the rDNA promoter. SL1/TIF-IB is involved in stabilization of nucleolar transcription factor 1/UBTF on rDNA. Formation of SL1/TIF-IB excludes the association of TBP with TFIID subunits. Recruits RNA polymerase I to the rRNA gene promoter via interaction with RRN3. This Mus musculus (Mouse) protein is TATA box-binding protein-associated factor RNA polymerase I subunit C (Taf1c).